Consider the following 1335-residue polypeptide: Restriction of telomere capping protein 1 (1335 aa).

A disordered region spans residues 1 to 39 (MSLSPHVENASIPKGSTPIPKNRNVSSIGKGEFLGSSSS). WD repeat units follow at residues 207 to 248 (NKFS…SIDN), 256 to 296 (EHTR…SKSS), 305 to 342 (TASDSIRDVKWMPGYNFASKNDQGSSTYGNLKSGYKFA), 367 to 406 (AHTGPGLCLNWHPNQEYIATGGRDGKCCLWFVGDNANAAE), 439 to 486 (NTGY…IPKH), and 489 to 527 (LSETPSLGLVWWDENLIFNIDKGTRINGWDINKEPTVLE). Disordered stretches follow at residues 559-593 (PELQPTSSTTCKKHPGTIKNPKNGNPENQGIIGGI), 600-619 (TGLTSFTPERPPTLKAGPTF), 630-651 (ASSFNSSSASLTSLTPQTENRE), 736-758 (KNATETHGDNTTTTNNNDDDDDD), and 783-824 (NEKV…DRSR). Low complexity predominate over residues 630 to 644 (ASSFNSSSASLTSLT). Low complexity predominate over residues 808-817 (SSISSISASR). A WD 7 repeat occupies 844-884 (LISIATHNASVYLSIDDLTNFKIWILIRDSLLWDLKWMTSS). Disordered stretches follow at residues 935–956 (AFRANSDEPSDAEKKPVSKLKE) and 1007–1037 (DEHEHQEEEQPHDSPTKSAQFHASPIAKSIP). 2 stretches are compositionally biased toward basic and acidic residues: residues 945–956 (DAEKKPVSKLKE) and 1009–1021 (HEHQEEEQPHDSP). 6 positions are modified to phosphoserine: serine 1030, serine 1074, serine 1081, serine 1083, serine 1117, and serine 1127. WD repeat units follow at residues 1130–1170 (REQL…TETG) and 1217–1256 (VLKYCPFEDIMGSEGDQSSIRLFCERCGELITNESSKEKL). An RING-type; degenerate zinc finger spans residues 1294–1335 (LKKLTMVILPCGHEGHFQCIQEWFLDENEQECPGGCPGVAFI).

The protein belongs to the WD repeat RTC1 family.

It is found in the vacuole. Functionally, may be involved in a process influencing telomere capping. The polypeptide is Restriction of telomere capping protein 1 (RTC1) (Saccharomyces cerevisiae (strain YJM789) (Baker's yeast)).